A 350-amino-acid polypeptide reads, in one-letter code: Methylthioribose-1-phosphate isomerase (350 aa).

Residues 48–50 (RGA), R93, and Q198 each bind substrate. Residue D239 is the Proton donor of the active site. 249–250 (NK) lines the substrate pocket.

The protein belongs to the eIF-2B alpha/beta/delta subunits family. MtnA subfamily.

It catalyses the reaction 5-(methylsulfanyl)-alpha-D-ribose 1-phosphate = 5-(methylsulfanyl)-D-ribulose 1-phosphate. The protein operates within amino-acid biosynthesis; L-methionine biosynthesis via salvage pathway; L-methionine from S-methyl-5-thio-alpha-D-ribose 1-phosphate: step 1/6. Catalyzes the interconversion of methylthioribose-1-phosphate (MTR-1-P) into methylthioribulose-1-phosphate (MTRu-1-P). This chain is Methylthioribose-1-phosphate isomerase, found in Fervidobacterium nodosum (strain ATCC 35602 / DSM 5306 / Rt17-B1).